A 125-amino-acid polypeptide reads, in one-letter code: Small ribosomal subunit protein uS13 (125 aa).

This sequence belongs to the universal ribosomal protein uS13 family. In terms of assembly, part of the 30S ribosomal subunit. Forms a loose heterodimer with protein S19. Forms two bridges to the 50S subunit in the 70S ribosome.

In terms of biological role, located at the top of the head of the 30S subunit, it contacts several helices of the 16S rRNA. In the 70S ribosome it contacts the 23S rRNA (bridge B1a) and protein L5 of the 50S subunit (bridge B1b), connecting the 2 subunits; these bridges are implicated in subunit movement. Contacts the tRNAs in the A and P-sites. The chain is Small ribosomal subunit protein uS13 from Rickettsia africae (strain ESF-5).